Reading from the N-terminus, the 360-residue chain is Phospho-N-acetylmuramoyl-pentapeptide-transferase (360 aa).

Helical transmembrane passes span 26–46 (AIVSLLTALFISLWMGPRMIA), 72–92 (PTMGGIMILTAITVSVLLWAY), 94–114 (SNPYVWCVLTVLIGYGIIGFV), 132–152 (WKYFWMSVIALGVAFALYLAG), 168–188 (VMPQLGLLYILLAYFVIVGTG), 199–219 (GLAIMPTVFVAAGFALVAWAT), 236–256 (AGELVIVCTAIVGAGLGFLWF), 263–283 (VFMGDVGSLALGGALGIIAVL), 288–308 (FLLVIMGGVFVVETLSVILQV), and 338–358 (VIVRFWIISLMLVLIGLATLK).

The protein belongs to the glycosyltransferase 4 family. MraY subfamily. Requires Mg(2+) as cofactor.

The protein localises to the cell inner membrane. It catalyses the reaction UDP-N-acetyl-alpha-D-muramoyl-L-alanyl-gamma-D-glutamyl-meso-2,6-diaminopimeloyl-D-alanyl-D-alanine + di-trans,octa-cis-undecaprenyl phosphate = di-trans,octa-cis-undecaprenyl diphospho-N-acetyl-alpha-D-muramoyl-L-alanyl-D-glutamyl-meso-2,6-diaminopimeloyl-D-alanyl-D-alanine + UMP. Its pathway is cell wall biogenesis; peptidoglycan biosynthesis. Its function is as follows. Catalyzes the initial step of the lipid cycle reactions in the biosynthesis of the cell wall peptidoglycan: transfers peptidoglycan precursor phospho-MurNAc-pentapeptide from UDP-MurNAc-pentapeptide onto the lipid carrier undecaprenyl phosphate, yielding undecaprenyl-pyrophosphoryl-MurNAc-pentapeptide, known as lipid I. This chain is Phospho-N-acetylmuramoyl-pentapeptide-transferase, found in Klebsiella pneumoniae (strain 342).